The chain runs to 414 residues: Serine hydroxymethyltransferase (414 aa).

(6S)-5,6,7,8-tetrahydrofolate is bound by residues L121 and 125–127; that span reads GHL. At K229 the chain carries N6-(pyridoxal phosphate)lysine.

This sequence belongs to the SHMT family. In terms of assembly, homodimer. Pyridoxal 5'-phosphate is required as a cofactor.

The protein resides in the cytoplasm. It carries out the reaction (6R)-5,10-methylene-5,6,7,8-tetrahydrofolate + glycine + H2O = (6S)-5,6,7,8-tetrahydrofolate + L-serine. It participates in one-carbon metabolism; tetrahydrofolate interconversion. The protein operates within amino-acid biosynthesis; glycine biosynthesis; glycine from L-serine: step 1/1. Its function is as follows. Catalyzes the reversible interconversion of serine and glycine with tetrahydrofolate (THF) serving as the one-carbon carrier. This reaction serves as the major source of one-carbon groups required for the biosynthesis of purines, thymidylate, methionine, and other important biomolecules. Also exhibits THF-independent aldolase activity toward beta-hydroxyamino acids, producing glycine and aldehydes, via a retro-aldol mechanism. The chain is Serine hydroxymethyltransferase from Paracidovorax citrulli (strain AAC00-1) (Acidovorax citrulli).